The chain runs to 843 residues: OTU domain-containing protein 7B (843 aa).

Positions 50–88 (GNLPPSFSEGSGGSRTPEKGFSDREPTRPPRPILQRQDD) are disordered. Over residues 65 to 77 (TPEKGFSDREPTR) the composition is skewed to basic and acidic residues. At S100 the chain carries Phosphoserine. Residues 152-401 (ERDLIEQSML…AVDPGKGWEW (250 aa)) form a TRAF-binding region. A catalytic region spans residues 167–440 (AGRLNWWVSV…VKWIPLSSDA (274 aa)). Residues 183 to 365 (LLPLATTGDG…QAHFSALVSM (183 aa)) form the OTU domain. The tract at residues 187-193 (ATTGDGN) is regulatory loop. The active site involves D191. Residue C194 is the Nucleophile of the active site. H358 (proton acceptor) is an active-site residue. Disordered regions lie at residues 442 to 587 (APLA…GGSK) and 652 to 711 (IMNG…CQEP). Basic and acidic residues-rich tracts occupy residues 456–471 (DEPRSTPESGDSDKES) and 488–500 (SKRDREKDKKRAD). A phosphoserine mark is found at S464, S467, and S471. The Nuclear localization signal motif lies at 483-498 (RRKEKSKRDREKDKKR). The segment covering 531-543 (KPGGVGTGLGGSS) has biased composition (gly residues). Over residues 665-675 (KKPEPDAREEQ) the composition is skewed to basic and acidic residues. The residue at position 729 (T729) is a Phosphothreonine. The disordered stretch occupies residues 732–792 (RQCPPGRPYP…PEPDGWAGGL (61 aa)). Residues 796–831 (PPTQTKCKQPNCSFYGHPETNNFCSCCYREELRRRE) form an A20-type zinc finger. The Zn(2+) site is built by C802, C807, C819, and C822.

It belongs to the peptidase C64 family. In terms of assembly, interacts with ZAP70 in activated T cells, but not in resting T cells. Interacts with TRAF3. Interacts with TRAF6. Interacts with PARK7, leading to inhibit deubiquitinase activity. Interacts with EGFR, ITCH and NEDD4. Phosphorylated by EGFR. In terms of tissue distribution, widely expressed. Abundant in kidney, heart and fetal liver. Expressed differentially among B-cells at distinct developmental stages. Higher expression seen in primary immature B-cells as compared to the mature cells.

The protein resides in the cytoplasm. It localises to the nucleus. The enzyme catalyses Thiol-dependent hydrolysis of ester, thioester, amide, peptide and isopeptide bonds formed by the C-terminal Gly of ubiquitin (a 76-residue protein attached to proteins as an intracellular targeting signal).. Its activity is regulated as follows. Deubiquitinase activity is inhibited following interaction with PARK7. Negative regulator of the non-canonical NF-kappa-B pathway that acts by mediating deubiquitination of TRAF3, an inhibitor of the NF-kappa-B pathway, thereby acting as a negative regulator of B-cell responses. In response to non-canonical NF-kappa-B stimuli, deubiquitinates 'Lys-48'-linked polyubiquitin chains of TRAF3, preventing TRAF3 proteolysis and over-activation of non-canonical NF-kappa-B. Negatively regulates mucosal immunity against infections. Deubiquitinates ZAP70, and thereby regulates T cell receptor (TCR) signaling that leads to the activation of NF-kappa-B. Plays a role in T cell homeostasis and is required for normal T cell responses, including production of IFNG and IL2. Mediates deubiquitination of EGFR. Has deubiquitinating activity toward 'Lys-11', 'Lys-48' and 'Lys-63'-linked polyubiquitin chains. Has a much higher catalytic rate with 'Lys-11'-linked polyubiquitin chains (in vitro); however the physiological significance of these data are unsure. Hydrolyzes both linear and branched forms of polyubiquitin. Acts as a regulator of mTORC1 and mTORC2 assembly by mediating 'Lys-63'-linked deubiquitination of MLST8, thereby promoting assembly of the mTORC2 complex, while inibiting formation of the mTORC1 complex. This chain is OTU domain-containing protein 7B (OTUD7B), found in Homo sapiens (Human).